A 236-amino-acid chain; its full sequence is Snake venom serine protease pallase (236 aa).

One can recognise a Peptidase S1 domain in the interval 1–227 (VIGGDECNIN…HLDWIENIIA (227 aa)). Cystine bridges form between Cys7-Cys139, Cys26-Cys42, Cys74-Cys234, Cys118-Cys188, Cys150-Cys167, and Cys178-Cys203. Active-site charge relay system residues include His41 and Asp86. Ser182 acts as the Charge relay system in catalysis.

Belongs to the peptidase S1 family. Snake venom subfamily. In terms of assembly, monomer. As to expression, expressed by the venom gland.

It is found in the secreted. Snake venom serine protease that may act in the hemostasis system of the prey. The sequence is that of Snake venom serine protease pallase from Gloydius halys (Chinese water mocassin).